A 90-amino-acid polypeptide reads, in one-letter code: Probable Fe(2+)-trafficking protein (90 aa).

Belongs to the Fe(2+)-trafficking protein family.

Could be a mediator in iron transactions between iron acquisition and iron-requiring processes, such as synthesis and/or repair of Fe-S clusters in biosynthetic enzymes. The sequence is that of Probable Fe(2+)-trafficking protein from Colwellia psychrerythraea (strain 34H / ATCC BAA-681) (Vibrio psychroerythus).